Reading from the N-terminus, the 323-residue chain is Beta-ketoacyl-[acyl-carrier-protein] synthase III (323 aa).

Residues C112 and H249 contribute to the active site. Positions 250-254 are ACP-binding; sequence QANYR. N279 is an active-site residue.

The protein belongs to the thiolase-like superfamily. FabH family. Homodimer.

The protein resides in the cytoplasm. The catalysed reaction is malonyl-[ACP] + acetyl-CoA + H(+) = 3-oxobutanoyl-[ACP] + CO2 + CoA. Its pathway is lipid metabolism; fatty acid biosynthesis. Catalyzes the condensation reaction of fatty acid synthesis by the addition to an acyl acceptor of two carbons from malonyl-ACP. Catalyzes the first condensation reaction which initiates fatty acid synthesis and may therefore play a role in governing the total rate of fatty acid production. Possesses both acetoacetyl-ACP synthase and acetyl transacylase activities. Its substrate specificity determines the biosynthesis of branched-chain and/or straight-chain of fatty acids. This chain is Beta-ketoacyl-[acyl-carrier-protein] synthase III, found in Clostridium kluyveri (strain NBRC 12016).